The primary structure comprises 963 residues: Spliceosome associated factor 3, U4/U6 recycling protein (963 aa).

A compositionally biased stretch (low complexity) spans 1 to 11 (MATAAETSASE). 2 disordered regions span residues 1 to 36 (MATA…RTRR) and 50 to 90 (TMGP…YDEE). The residue at position 2 (Ala2) is an N-acetylalanine. The segment at 2–351 (ATAAETSASE…LVPDLWIRYS (350 aa)) is mediates interaction with PRPF3. Phosphoserine is present on residues Ser10 and Ser16. Positions 14-23 (AESKAGPKAD) are enriched in basic and acidic residues. Residues 21–46 (KADGEEDEVKAARTRRKVLSRAVAAA) are a coiled coil. Positions 57-69 (QQEEGVSESDGDE) are enriched in acidic residues. Residues 82-110 (EYEWEYDEEEEKNQLEIERLEEQLSINVY) adopt a coiled-coil conformation. 8 HAT repeats span residues 126–158 (GELT…DEIS), 164–195 (LDRE…YSVG), 201–237 (GGLE…FESA), 242–275 (ARLE…WSED), 324–356 (GDPA…YLDR), 359–391 (KVKD…AMER), 394–430 (VDHQ…YLRR), and 487–520 (NNMQ…LERA). Position 215 is a phosphoserine (Ser215). The interval 487–520 (NNMQKARELWDSIMTRGNAKYANMWLEYYNLERA) is required for interaction with USP4. A necessary and sufficient for U6 snRNA binding region spans residues 537-953 (CTSDYPEHVC…AATEAPKMSN (417 aa)). Positions 559–619 (LEDWDIAVQK…ALKKKKKIRG (61 aa)) form a coiled coil. Residues 590 to 601 (LVQQEEEKAEQR) show a composition bias toward basic and acidic residues. Residues 590–694 (LVQQEEEKAE…AASLKRDMPK (105 aa)) are disordered. The tract at residues 600–670 (QRKRARAEKK…EVAAGPAGKC (71 aa)) is required for nuclear localization. The Nuclear localization signal motif lies at 601–608 (RKRARAEK). Positions 602-617 (KRARAEKKALKKKKKI) are enriched in basic residues. Residues 626–639 (DEDDEKEWGDDEEE) show a composition bias toward acidic residues. Position 650 is a phosphoserine (Ser650). Thr657 carries the phosphothreonine modification. Positions 677 to 694 (PPSKQKEKAASLKRDMPK) are enriched in basic and acidic residues. In terms of domain architecture, RRM 1 spans 704–782 (ITVFVSNLPY…RPMFVSPCVD (79 aa)). Phosphoserine occurs at positions 769, 795, and 852. The region spanning 801 to 878 (HKLFISGLPF…NIIKVAISNP (78 aa)) is the RRM 2 domain. A disordered region spans residues 878-898 (PPQRKVPEKPETRKAPGGPML). Basic and acidic residues predominate over residues 882–891 (KVPEKPETRK). Arg906 carries the omega-N-methylarginine modification. The disordered stretch occupies residues 920-948 (LQRPSAAAPQAENGPAAAPAVAAPAATEA). The segment covering 925–948 (AAAPQAENGPAAAPAVAAPAATEA) has biased composition (low complexity).

In terms of assembly, component of the 7SK snRNP complex at least composed of P-TEFb (composed of CDK9 and CCNT1/cyclin-T1), HEXIM1, HEXIM2, BCDIN3, SART3 proteins and 7SK and U6 snRNAs. Interacts with AGO1 and AGO2. Interacts with PRPF3 and USP4; the interaction with PRPF3 is direct and recruits USP4 to its substrate PRPF3. Interacts with USP15; the interaction is direct. Interacts with HIV-1 Tat. As to expression, ubiquitously expressed.

It localises to the nucleus. The protein resides in the nucleoplasm. Its subcellular location is the cajal body. It is found in the nucleus speckle. The protein localises to the cytoplasm. In terms of biological role, U6 snRNP-binding protein that functions as a recycling factor of the splicing machinery. Promotes the initial reassembly of U4 and U6 snRNPs following their ejection from the spliceosome during its maturation. Also binds U6atac snRNPs and may function as a recycling factor for U4atac/U6atac spliceosomal snRNP, an initial step in the assembly of U12-type spliceosomal complex. The U12-type spliceosomal complex plays a role in the splicing of introns with non-canonical splice sites. May also function as a substrate-targeting factor for deubiquitinases like USP4 and USP15. Recruits USP4 to ubiquitinated PRPF3 within the U4/U5/U6 tri-snRNP complex, promoting PRPF3 deubiquitination and thereby regulating the spliceosome U4/U5/U6 tri-snRNP spliceosomal complex disassembly. May also recruit the deubiquitinase USP15 to histone H2B and mediate histone deubiquitination, thereby regulating gene expression and/or DNA repair. May play a role in hematopoiesis probably through transcription regulation of specific genes including MYC. Regulates Tat transactivation activity through direct interaction. May be a cellular factor for HIV-1 gene expression and viral replication. The protein is Spliceosome associated factor 3, U4/U6 recycling protein of Homo sapiens (Human).